A 359-amino-acid chain; its full sequence is Type-1 angiotensin II receptor (359 aa).

Residues 1–25 lie on the Extracellular side of the membrane; that stretch reads MALNSSADDGIKRIQDDCPKAGRHS. An N-linked (GlcNAc...) asparagine glycan is attached at Asn4. Residues Gln15 and Asp17 each coordinate angiotensin II. 2 disulfide bridges follow: Cys18–Cys274 and Cys101–Cys180. A helical transmembrane segment spans residues 26-55; it reads YIFVMIPTLYSIIFVVGIFGNSLVVIVIYF. At 56 to 61 the chain is on the cytoplasmic side; the sequence is YMKLKT. A helical membrane pass occupies residues 62–89; that stretch reads VASVFLLNLALADLCFLLTLPVWAVYTA. Residues 90–98 are Extracellular-facing; that stretch reads MEYRWPFGN. A helical membrane pass occupies residues 99–125; sequence HLCKIASAGISFNLYASVFLLTCLSID. Topologically, residues 126–141 are cytoplasmic; the sequence is RYLAIVHPMKSRLRRT. Residues 142–165 form a helical membrane-spanning segment; sequence MLVAKVTCVVIWLLAGLASLPAVI. Topologically, residues 166-190 are extracellular; sequence HRNVYFIENTNSTVCAFHYESQNST. Arg167 contributes to the angiotensin II binding site. Asn176 carries an N-linked (GlcNAc...) asparagine glycan. 3 residues coordinate angiotensin II: Phe182, His183, and Tyr184. Asn188 carries N-linked (GlcNAc...) asparagine glycosylation. The chain crosses the membrane as a helical span at residues 191 to 216; sequence LPVGLGLTKNILGFMFPFLIILTSYT. Lys199 provides a ligand contact to angiotensin II. Residues 217 to 239 are Cytoplasmic-facing; sequence LIWKALKKAYEIQKNKPRNDDIF. Residues 240–268 form a helical membrane-spanning segment; sequence RIIMAIVLFFFFSWIPHQIFTFLDVLIQL. Over 269-278 the chain is Extracellular; the sequence is GVIRDCKIAD. The helical transmembrane segment at 279–304 threads the bilayer; it reads VVDTAMPITICIAYFNNCLNPLFYGF. At 305-359 the chain is on the cytoplasmic side; it reads LGKKFKKYFLQLLKYIPPKAKSHSSLSTKMSTLSYRPSDNMNSSAKKPASCFEVE. Cys355 is lipidated: S-palmitoyl cysteine.

This sequence belongs to the G-protein coupled receptor 1 family. As to quaternary structure, interacts with MAS1. Interacts with ARRB1. Interacts with FLNA (via filamin repeat 21); increases PKA-mediated phosphorylation of FLNA. C-terminal Ser or Thr residues may be phosphorylated.

The protein resides in the cell membrane. In terms of biological role, receptor for angiotensin II, a vasoconstricting peptide, which acts as a key regulator of blood pressure and sodium retention by the kidney. The activated receptor in turn couples to G-alpha proteins G(q) (GNAQ, GNA11, GNA14 or GNA15) and thus activates phospholipase C and increases the cytosolic Ca(2+) concentrations, which in turn triggers cellular responses such as stimulation of protein kinase C. The chain is Type-1 angiotensin II receptor (AGTR1) from Meriones unguiculatus (Mongolian jird).